Consider the following 442-residue polypeptide: tRNA modification GTPase MnmE (442 aa).

3 residues coordinate (6S)-5-formyl-5,6,7,8-tetrahydrofolate: R21, E79, and K118. The region spanning 214–367 (GFKIAIVGKP…LKEELQNYLN (154 aa)) is the TrmE-type G domain. A K(+)-binding site is contributed by N224. GTP-binding positions include 224–229 (NVGKSS), 243–249 (SDIAGTT), and 268–271 (DTAG). S228 contacts Mg(2+). S243, I245, and T248 together coordinate K(+). T249 is a Mg(2+) binding site. K442 serves as a coordination point for (6S)-5-formyl-5,6,7,8-tetrahydrofolate.

It belongs to the TRAFAC class TrmE-Era-EngA-EngB-Septin-like GTPase superfamily. TrmE GTPase family. In terms of assembly, homodimer. Heterotetramer of two MnmE and two MnmG subunits. It depends on K(+) as a cofactor.

It localises to the cytoplasm. Exhibits a very high intrinsic GTPase hydrolysis rate. Involved in the addition of a carboxymethylaminomethyl (cmnm) group at the wobble position (U34) of certain tRNAs, forming tRNA-cmnm(5)s(2)U34. This is tRNA modification GTPase MnmE from Campylobacter jejuni subsp. jejuni serotype O:23/36 (strain 81-176).